A 242-amino-acid polypeptide reads, in one-letter code: Protein FsrB (242 aa).

The next 5 membrane-spanning stretches (helical) occupy residues 29-49 (LTVYFSGLFNFLMILILSVLF), 52-72 (LSETFIVYVVLIFLRPVAGGW), 78-95 (WLCRLESIVIYVAIPFVL), 100-120 (VSLPFIYKILLICLLVVLFYW), and 160-180 (KIASVILYGLVIQGLMILPVT).

Belongs to the AgrB family.

The protein localises to the cell membrane. May be involved in the proteolytic processing of a quorum sensing system signal molecule precursor required for the regulation of the virulence genes for gelatinase (gelE) and a serine protease (sprE). The chain is Protein FsrB (fsrB) from Enterococcus faecalis (strain ATCC 47077 / OG1RF).